The chain runs to 61 residues: UPF0434 protein PSPTO_3844 (61 aa).

Belongs to the UPF0434 family.

This Pseudomonas syringae pv. tomato (strain ATCC BAA-871 / DC3000) protein is UPF0434 protein PSPTO_3844.